A 545-amino-acid chain; its full sequence is Cytochrome P450 monooxygenase 212 (545 aa).

An N-terminal signal peptide occupies residues Met1–Gly14. Cys486 is a heme binding site.

The protein belongs to the cytochrome P450 family. Heme is required as a cofactor.

Its pathway is secondary metabolite biosynthesis. In terms of biological role, cytochrome P450 monooxygenase that is able to use anthracene and pyrene as substrates for oxidation. This chain is Cytochrome P450 monooxygenase 212, found in Postia placenta (strain ATCC 44394 / Madison 698-R) (Brown rot fungus).